The primary structure comprises 332 residues: Glyceraldehyde-3-phosphate dehydrogenase 2 (332 aa).

Residues Arg11 to Ile12, Asp32, and Arg77 contribute to the NAD(+) site. Residues Ser148 to Thr150, Thr179, Thr208 to Gly209, and Arg231 contribute to the D-glyceraldehyde 3-phosphate site. Cys149 serves as the catalytic Nucleophile. Residue Asn313 participates in NAD(+) binding.

It belongs to the glyceraldehyde-3-phosphate dehydrogenase family. In terms of assembly, homotetramer.

Its subcellular location is the cytoplasm. The enzyme catalyses D-glyceraldehyde 3-phosphate + phosphate + NAD(+) = (2R)-3-phospho-glyceroyl phosphate + NADH + H(+). It participates in carbohydrate degradation; glycolysis; pyruvate from D-glyceraldehyde 3-phosphate: step 1/5. The chain is Glyceraldehyde-3-phosphate dehydrogenase 2 (Gapdh2) from Drosophila pseudoobscura pseudoobscura (Fruit fly).